The following is a 1289-amino-acid chain: SH3 domain and tetratricopeptide repeat-containing protein 2 (1289 aa).

SH3 domains are found at residues Glu-176 to Val-239 and Ile-267 to Cys-330. The segment at Ser-393 to Pro-442 is disordered. Residues Gly-414–Ser-424 are compositionally biased toward low complexity. TPR repeat units lie at residues Ala-529–Ala-562, Arg-758–Leu-791, Gly-837–Met-870, Gly-1002–Leu-1038, Leu-1085–Arg-1119, Met-1120–Ala-1153, Leu-1167–Trp-1200, and Ala-1211–Met-1245.

The protein is SH3 domain and tetratricopeptide repeat-containing protein 2 (Sh3tc2) of Mus musculus (Mouse).